The primary structure comprises 328 residues: Fructokinase-2 (328 aa).

The protein belongs to the carbohydrate kinase PfkB family.

It catalyses the reaction D-fructose + ATP = D-fructose 6-phosphate + ADP + H(+). Its pathway is glycan biosynthesis; starch biosynthesis. May play an important role in maintaining the flux of carbon towards starch formation. The polypeptide is Fructokinase-2 (FRK2) (Solanum habrochaites (Wild tomato)).